The chain runs to 262 residues: Trypsin theta (262 aa).

The signal sequence occupies residues 1–19 (MHRLVVLLVCLAVGSACAG). Positions 20 to 34 (TVGVSNGDPFEREGR) are cleaved as a propeptide — activation peptide. A Peptidase S1 domain is found at 35 to 260 (IVGGEDTTIG…LRKWILNASE (226 aa)). Residues cysteine 61 and cysteine 77 are joined by a disulfide bond. Residues histidine 76 and aspartate 121 each act as charge relay system in the active site. Intrachain disulfides connect cysteine 186-cysteine 203 and cysteine 212-cysteine 236. Serine 216 acts as the Charge relay system in catalysis.

Belongs to the peptidase S1 family.

The protein localises to the secreted. It is found in the extracellular space. The catalysed reaction is Preferential cleavage: Arg-|-Xaa, Lys-|-Xaa.. The protein is Trypsin theta (thetaTry) of Drosophila melanogaster (Fruit fly).